The chain runs to 395 residues: Protein HIGH CHLOROPHYLL FLUORESCENCE PHENOTYPE 244, chloroplastic (395 aa).

The transit peptide at 1–64 (MASLRLPAQL…ERSIVVPVTC (64 aa)) directs the protein to the chloroplast.

Belongs to the NmrA-type oxidoreductase family. Component of a high molecular weight complex containing OHP1, OHP2 and HCF244, and PSII core proteins D1/D2, HCF136 and HCF173. Interacts with OHP1. Forms a trimeric complex with OHP1 and OHP2 that mutually stabilizes each subunit.

It localises to the plastid. The protein resides in the chloroplast stroma. It is found in the chloroplast thylakoid membrane. Its function is as follows. Auxiliary factor required, together with HCF173, for the biogenesis of photosystem II (PSII), especially for the synthesis of the reaction center proteins (e.g. D1), via the regulation of the corresponding mRNA (e.g. psbA) translation initiation (ribosomal loading) and stabilization. Forms a trimeric complex with OHP1 and OHP2 that is required to promote PSII core subunit assembly. The trimeric complex forms a transient PSII reaction center-like complex with PsbA, PsbD, PsbE, PsbF and PsbI subunits in thylakoids for early assembly of PSII as well as PSII repair. The trimeric complex is required for the recruitment of ribosomes to the psbA mRNA during PSII biogenesis and repair. This Arabidopsis thaliana (Mouse-ear cress) protein is Protein HIGH CHLOROPHYLL FLUORESCENCE PHENOTYPE 244, chloroplastic.